The following is a 310-amino-acid chain: 300 kDa antigen AG231 (310 aa).

The tract at residues 1-23 (VTGSCVVTGSCVVTDSCVVTGSC) is 4 X 6 AA tandem repeats of V-V-T-G-S-C. The interval 29 to 106 (VTTQESVTTQ…TQEPVTVEEH (78 aa)) is 13 X 6 AA tandem repeats of V-V-[TI]-[QE]-E-[PH]. Positions 53-101 (VTIEEPVTTQEPVTIEEPVTTQEPVTTQEPVTTQEPVTTQEPVTTQEPV) are enriched in low complexity. The interval 53-310 (VTIEEPVTTQ…FGRGNKNDKK (258 aa)) is disordered. 2 stretches are compositionally biased toward basic and acidic residues: residues 103-114 (VEEHIDEKKGSE) and 147-160 (NKND…KKPS). The stretch at 107-152 (IDEKKGSEGDNISLSSLSEETEEKSHTKKKKSSWLKFGRGNKNDKK) is one 45 AA repeat 1 repeat. Over residues 176 to 190 (TDSQISVNAQDSVTI) the composition is skewed to polar residues. Residues 188–265 (VTIQEPTATQ…TQEPSTTQEH (78 aa)) are 13 X 6 AA approximate tandem repeats. Over residues 191 to 235 (QEPTATQEPPTTQELTATQEPTTTQETVTEQEPTTTQETVTAQEP) the composition is skewed to low complexity. Positions 236-263 (ITTQEPVTAQEPVTTQELIATQEPSTTQ) are enriched in polar residues. Residues 264-273 (EHADEKKASE) are compositionally biased toward basic and acidic residues. One copy of the 45 AA repeat 2 repeat lies at 266 to 310 (ADEKKASEGDNISLSRLSEETEEKSHTKKKSSWLKFGRGNKNDKK).

The chain is 300 kDa antigen AG231 (FIRA) from Plasmodium falciparum (isolate FC27 / Papua New Guinea).